Reading from the N-terminus, the 171-residue chain is uncharacterized protein (171 aa).

A helical membrane pass occupies residues 5–25 (FLLTIFALWVGGFGYYLYLIN).

It is found in the membrane. This is an uncharacterized protein from Rickettsia conorii (strain ATCC VR-613 / Malish 7).